A 213-amino-acid chain; its full sequence is NADH-quinone oxidoreductase subunit I (213 aa).

4Fe-4S ferredoxin-type domains follow at residues 74 to 103 and 113 to 142; these read RFIESENERCIGCGLCEKICISNCIRMETS and ENYSINLGRCIYCGFCAEVCPELAIVHGTE. C83, C86, C89, C93, C122, C125, C128, and C132 together coordinate [4Fe-4S] cluster.

Belongs to the complex I 23 kDa subunit family. NDH-1 is composed of 14 different subunits. Subunits NuoA, H, J, K, L, M, N constitute the membrane sector of the complex. [4Fe-4S] cluster serves as cofactor.

It localises to the cell inner membrane. It catalyses the reaction a quinone + NADH + 5 H(+)(in) = a quinol + NAD(+) + 4 H(+)(out). Its function is as follows. NDH-1 shuttles electrons from NADH, via FMN and iron-sulfur (Fe-S) centers, to quinones in the respiratory chain. The immediate electron acceptor for the enzyme in this species is believed to be ubiquinone. Couples the redox reaction to proton translocation (for every two electrons transferred, four hydrogen ions are translocated across the cytoplasmic membrane), and thus conserves the redox energy in a proton gradient. This Campylobacter jejuni subsp. jejuni serotype O:23/36 (strain 81-176) protein is NADH-quinone oxidoreductase subunit I.